The following is a 134-amino-acid chain: U35-theraphotoxin-Cg1a (134 aa).

A signal peptide spans 1-18 (MLVTLLETFSVVFQVANG). A propeptide spanning residues 19 to 56 (DGNCVPRFQDDVEFCDNYILEAVTEASKMIAPRAREQK) is cleaved from the precursor.

As to expression, expressed by the venom gland.

It localises to the secreted. Its function is as follows. Probable secreted venom toxin. The sequence is that of U35-theraphotoxin-Cg1a from Chilobrachys guangxiensis (Chinese earth tiger tarantula).